Here is a 704-residue protein sequence, read N- to C-terminus: Polyribonucleotide nucleotidyltransferase (704 aa).

Residues D487 and D493 each coordinate Mg(2+). The 60-residue stretch at P554–I613 folds into the KH domain. Positions G623 to K691 constitute an S1 motif domain.

The protein belongs to the polyribonucleotide nucleotidyltransferase family. In terms of assembly, component of the RNA degradosome, which is a multiprotein complex involved in RNA processing and mRNA degradation. Mg(2+) is required as a cofactor.

The protein resides in the cytoplasm. The enzyme catalyses RNA(n+1) + phosphate = RNA(n) + a ribonucleoside 5'-diphosphate. Involved in mRNA degradation. Catalyzes the phosphorolysis of single-stranded polyribonucleotides processively in the 3'- to 5'-direction. The polypeptide is Polyribonucleotide nucleotidyltransferase (Xanthomonas axonopodis pv. citri (strain 306)).